The following is a 1240-amino-acid chain: ATP-dependent helicase/nuclease subunit A (1240 aa).

The region spanning 12 to 485 (SQWTDDQWKA…IDLAKNFRSR (474 aa)) is the UvrD-like helicase ATP-binding domain. 33-40 (AAAGSGKT) is a binding site for ATP. The UvrD-like helicase C-terminal domain occupies 497 to 804 (KQIMGEEVGE…RIMTIHKSKG (308 aa)).

Belongs to the helicase family. AddA subfamily. In terms of assembly, heterodimer of AddA and AddB/RexB. Requires Mg(2+) as cofactor.

It carries out the reaction Couples ATP hydrolysis with the unwinding of duplex DNA by translocating in the 3'-5' direction.. The enzyme catalyses ATP + H2O = ADP + phosphate + H(+). Its function is as follows. The heterodimer acts as both an ATP-dependent DNA helicase and an ATP-dependent, dual-direction single-stranded exonuclease. Recognizes the chi site generating a DNA molecule suitable for the initiation of homologous recombination. The AddA nuclease domain is required for chi fragment generation; this subunit has the helicase and 3' -&gt; 5' nuclease activities. The polypeptide is ATP-dependent helicase/nuclease subunit A (Bacillus cereus (strain AH820)).